A 199-amino-acid chain; its full sequence is Transmembrane protein 9B (199 aa).

Residues 1–34 (MASLWCGNLLRLGSGLSMSCLALSVLLLAQLTGA) form the signal peptide. N61 carries N-linked (GlcNAc...) asparagine glycosylation. A helical membrane pass occupies residues 106–126 (IIIYLSILGLLLLYMVYLTLV). S143 and S190 each carry phosphoserine.

This sequence belongs to the TMEM9 family. Post-translationally, N-glycosylated.

It localises to the lysosome membrane. It is found in the early endosome membrane. Its function is as follows. Enhances production of pro-inflammatory cytokines induced by TNF, IL1B, and TLR ligands. Has a role in TNF activation of both the NF-kappaB and MAPK pathways. The sequence is that of Transmembrane protein 9B (Tmem9b) from Mus musculus (Mouse).